The chain runs to 55 residues: Spermatid nuclear transition protein 1 (55 aa).

The segment covering 1–42 (MSTSRKLKTHGMRRGKNRAPHKGVKRGGSKRKYRKSSLKSRK) has biased composition (basic residues). Residues 1–55 (MSTSRKLKTHGMRRGKNRAPHKGVKRGGSKRKYRKSSLKSRKRGDDASRNYRSHL) form a disordered region. 3 positions are modified to phosphoserine: Ser36, Ser37, and Ser40.

This sequence belongs to the nuclear transition protein 1 family. Testis.

It is found in the nucleus. The protein localises to the chromosome. In terms of biological role, plays a key role in the replacement of histones to protamine in the elongating spermatids of mammals. In condensing spermatids, loaded onto the nucleosomes, where it promotes the recruitment and processing of protamines, which are responsible for histone eviction. This Rattus norvegicus (Rat) protein is Spermatid nuclear transition protein 1 (Tnp1).